Here is a 62-residue protein sequence, read N- to C-terminus: Large ribosomal subunit protein uL15 (62 aa).

The protein belongs to the universal ribosomal protein uL15 family.

In Candida albicans (Yeast), this protein is Large ribosomal subunit protein uL15 (RPL28).